Consider the following 931-residue polypeptide: MSANSFDARSTLQVGDESYEIFRLDKVEGSARLPYSLKVLLENLLRTEDGANITADHIRALGGWDSQAQPSQEIQFTPARVIMQDFTGVPCVVDLATMREAVKELGGDPAKINPLAPAELVIDHSVIADKFGTNDAFKQNVELEYGRNKERYQFLRWGQTAFDEFKVVPPGTGIVHQVNIEHLARTVMVRGGQAYPDTLVGTDSHTTMVNGLGVLGWGVGGIEAEAAMLGQPVSMLIPRVVGFKLTGELKPGTTATDLVLTITEMLRGHGVVGKFVEFYGEGVAATSLANRATIGNMSPEFGSTAAIFPIDDETLNYLRLTGRSEQQVALVESYAKEQGLWLDPAAEPDFSEKLELDLSTVVPSIAGPKRPQDRIVLAEAAQQFAKDVLNYVEAPAAQPAASASPVDEASAESFPASDAPAYGSQENGAGAPQHADGTGAAVPSNPVTVTAPDGTSYEIDHGAVTVAAITSCTNTSNPYVMVAAALVAKKAVEKGLTRKPWVKTTLAPGSKVVTDYFEKSGLTPYLDKVGFNLVGYGCTTCIGNSGPLPEEVSKAVNDHDLAVTSVLSGNRNFEGRINPDVKMNYLASPPLVVAYALAGSMKVDITKDALGTDQDGNPVYLKDIWPSEAEVNDVVANAIGEDMFSKSYSDVFAGDAQWQALPIPTGNTFEWDPESTYVRKPPYFEGMEMEPAPVEDIAGARVLAKLGDSVTTDHISPAGAIKADTPAGKYLTEHGVERRDFNSYGSRRGNHEVMIRGTFANIRLRNQIAPGTEGGYTRDFTKDDAPVSFIYDASRNYIEQGIPLVVLAGKEYGSGSSRDWAAKGTALLGVKAVIAESYERIHRSNLIGMGVLPLQFPEGQSAATLGLTGEETFSFSGVTELNNGTTPRTVKVTTDTGVEFDAVVRIDTPGEADYYRNGGIMQYVLRSLIRK.

The interval 402–454 (SASPVDEASAESFPASDAPAYGSQENGAGAPQHADGTGAAVPSNPVTVTAPDG) is disordered. The [4Fe-4S] cluster site is built by cysteine 472, cysteine 538, and cysteine 541.

It belongs to the aconitase/IPM isomerase family. It depends on [4Fe-4S] cluster as a cofactor.

It catalyses the reaction citrate = D-threo-isocitrate. The catalysed reaction is citrate = cis-aconitate + H2O. The enzyme catalyses cis-aconitate + H2O = D-threo-isocitrate. It participates in carbohydrate metabolism; tricarboxylic acid cycle; isocitrate from oxaloacetate: step 2/2. Catalyzes the reversible isomerization of citrate to isocitrate via cis-aconitate in the tricarboxylic acid (TCA) cycle. Aconitase activity is important for the initiation of morphological and physiological differentiation of S.viridochromogenes. In addition, the apo form of AcnA (lacking the [4Fe-4S] cluster) functions as a RNA-binding regulatory protein, which binds to iron responsive elements (IREs) located on the untranslated region of certain mRNAs, including recA and ftsZ. Binding to IRE-like structures probably alters the target mRNA stability and regulates the protein amount. The apo form plays a regulatory role in oxidative stress response. The sequence is that of Aconitate hydratase A from Streptomyces viridochromogenes (strain DSM 40736 / JCM 4977 / BCRC 1201 / Tue 494).